The following is a 26-amino-acid chain: Halocyntin (26 aa).

Has strong antibacterial activity against the Gram-positive bacteria M.luteus, S.aureus, B.megaterium, A.viridans and E.faecalis, and against the Gram-negative bacterium K.pneumoniae. Has less potent antibacterial activity against the Gram-negative bacteria E.coli DH5alpha, S.typhimurium, P.aeruginosa, E.aerogenes and N.gonorrhoeae. Has moderate hemolytic activity against sheep erythrocytes. The protein is Halocyntin of Halocynthia papillosa (Red sea-squirt).